The primary structure comprises 230 residues: Flagellar L-ring protein (230 aa).

The signal sequence occupies residues 1-15 (MSRLPSLSSLCLAIA). Cys16 carries N-palmitoyl cysteine lipidation. Cys16 is lipidated: S-diacylglycerol cysteine.

It belongs to the FlgH family. As to quaternary structure, the basal body constitutes a major portion of the flagellar organelle and consists of four rings (L,P,S, and M) mounted on a central rod.

It is found in the cell outer membrane. It localises to the bacterial flagellum basal body. Its function is as follows. Assembles around the rod to form the L-ring and probably protects the motor/basal body from shearing forces during rotation. The polypeptide is Flagellar L-ring protein (Xanthomonas campestris pv. campestris (strain 8004)).